A 432-amino-acid polypeptide reads, in one-letter code: Teosinte glume architecture 1 (432 aa).

Disordered stretches follow at residues 20–55 and 68–102; these read HAAAAPSSGGHAANAAAAGTGTESRPPAPGAAGAPA and ECEPGAARREREAAAGAAKRPRPAGPGGQQQQQQC. The segment covering 22-41 has biased composition (low complexity); sequence AAAPSSGGHAANAAAAGTGT. Residues 102–179 form an SBP-type zinc finger; the sequence is CPSCAVDGCR…DGHNRRRRKP (78 aa). Zn(2+)-binding residues include C105, C110, C127, H130, C146, C149, H153, and C165. Over residues 409-420 the composition is skewed to gly residues; the sequence is GGGSGGGEGSSD. The tract at residues 409 to 432 is disordered; that stretch reads GGGSGGGEGSSDGGTSSSMPFSWQ.

As to quaternary structure, monomer and homodimer. As to expression, strongly expressed in immature ears and weakly in husks. Found in the inflorescence meristem of the developing ear, in the spikelet pair primordia, the glume primordia, the cupule forming region and other floral organs. Not detected in other tissues.

Functionally, SBP transcriptional regulator probably involved in the domestication of maize. Acts as a transcriptional repressor binding to a 5'-GTAC-3' motif. May repress the growth of lateral branches in length and numbers. This chain is Teosinte glume architecture 1, found in Zea mays (Maize).